The sequence spans 439 residues: Probable RNA-binding protein 23 (439 aa).

The interval 13-159 (MLEAPYKKEE…PVREPVDNLS (147 aa)) is disordered. The segment covering 17 to 34 (PYKKEEDEQQRKEVKKDY) has biased composition (basic and acidic residues). A compositionally biased stretch (low complexity) spans 36 to 57 (SNTTSSTSNSGNETSGSSTIGE). The segment covering 60–90 (KKKRSRSHNKSRDRKRSRSRDRDRYRRRNSR) has biased composition (basic residues). A compositionally biased stretch (basic and acidic residues) spans 103 to 125 (RSWDRRHGSESRSRDHRREDRVH). Phosphoserine occurs at positions 128 and 149. The segment covering 144–159 (HFREKSPVREPVDNLS) has biased composition (basic and acidic residues). RRM domains lie at 166–243 (RTVF…ASQA) and 263–341 (MRLY…HVTE).

Belongs to the splicing factor SR family. Post-translationally, aryl sulfonamide anticancer drugs, such as indisulam (E7070) or E7820, promote ubiquitination and subsequent degradation by the DCX(DCAF15) complex. Aryl sulfonamide anticancer drugs change the substrate specificity of DCAF15 by acting as a molecular glue that promotes binding between DCAF15 and weak affinity interactor RBM23. Highly expressed in placenta, liver, skeletal muscle, heart and kidney. Expressed at lower levels in the colon, thymus, spleen, small intestine and lung.

Its subcellular location is the nucleus. RNA-binding protein that acts both as a transcription coactivator and pre-mRNA splicing factor. Regulates steroid hormone receptor-mediated transcription, independently of the pre-mRNA splicing factor activity. The polypeptide is Probable RNA-binding protein 23 (Homo sapiens (Human)).